We begin with the raw amino-acid sequence, 219 residues long: 3-dehydroquinate dehydratase (219 aa).

Residues S10, 29 to 31, and R59 each bind 3-dehydroquinate; that span reads EVR. H116 functions as the Proton donor/acceptor in the catalytic mechanism. K142 serves as the catalytic Schiff-base intermediate with substrate. R180 and Q203 together coordinate 3-dehydroquinate.

This sequence belongs to the type-I 3-dehydroquinase family. In terms of assembly, homodimer.

It carries out the reaction 3-dehydroquinate = 3-dehydroshikimate + H2O. The protein operates within metabolic intermediate biosynthesis; chorismate biosynthesis; chorismate from D-erythrose 4-phosphate and phosphoenolpyruvate: step 3/7. Involved in the third step of the chorismate pathway, which leads to the biosynthesis of aromatic amino acids. Catalyzes the cis-dehydration of 3-dehydroquinate (DHQ) and introduces the first double bond of the aromatic ring to yield 3-dehydroshikimate. The sequence is that of 3-dehydroquinate dehydratase from Methanocella arvoryzae (strain DSM 22066 / NBRC 105507 / MRE50).